A 2472-amino-acid polypeptide reads, in one-letter code: Telomere-associated protein RIF1 (2472 aa).

Residues 1 to 25 (MTARGQSPLAPLLETLEDPSASHGG) are disordered. Position 402 is a phosphoserine (Ser-402). Thr-409 is subject to Phosphothreonine. A phosphoserine mark is found at Ser-782, Ser-979, and Ser-1008. Thr-1047 carries the post-translational modification Phosphothreonine. Positions 1145–1192 (LEKSSLSNNECGSLDKTSPEMSNSNNDERKKALISSRKTSTECASSTE) are disordered. A compositionally biased stretch (polar residues) spans 1148-1169 (SSLSNNECGSLDKTSPEMSNSN). Position 1162 is a phosphoserine (Ser-1162). Position 1220 is a phosphothreonine (Thr-1220). Ser-1236 and Ser-1238 each carry phosphoserine. Basic and acidic residues-rich tracts occupy residues 1265-1279 (AKQR…DSEK) and 1306-1315 (MRSEPEKNTE). Disordered stretches follow at residues 1265–1318 (AKQR…EESV), 1398–1464 (MVNE…DVLP), and 1479–1587 (IEKG…DQEE). Over residues 1400-1412 (NEDSQVQITPNQK) the composition is skewed to polar residues. Residues Ser-1422, Ser-1454, and Ser-1513 each carry the phosphoserine modification. Basic and acidic residues-rich tracts occupy residues 1431-1464 (SQDK…DVLP) and 1500-1530 (EQNK…EKLV). Phosphothreonine is present on Thr-1518. Ser-1542, Ser-1552, Ser-1554, Ser-1556, and Ser-1564 each carry phosphoserine. Positions 1565 to 1574 (RKKRSGKWKN) are enriched in basic residues. Phosphoserine is present on residues Ser-1576, Ser-1579, Ser-1613, Ser-1616, Ser-1688, Ser-1693, Ser-1706, and Ser-1709. Residues 1762–1782 (TKKADVQAPVSPSETSQANPY) are disordered. A compositionally biased stretch (polar residues) spans 1771–1782 (VSPSETSQANPY). Thr-1806 bears the Phosphothreonine mark. Ser-1810 bears the Phosphoserine mark. Over residues 1846 to 1859 (AMSLESQESPNENF) the composition is skewed to polar residues. The segment at 1846 to 1889 (AMSLESQESPNENFKTVGPCLGDSKNVSQESLETKEEKPEETPK) is disordered. Ser-1873 and Ser-1876 each carry phosphoserine. The segment covering 1877 to 1889 (LETKEEKPEETPK) has biased composition (basic and acidic residues). The segment at 1924–2472 (EASFHGQERT…WRSPSHENSI (549 aa)) is interaction with condensed chromosomes in telophase. Phosphoserine is present on residues Ser-1926 and Ser-1971. The segment at 1992 to 2021 (EQTAAGELDGGNDVSDLHSSEETNTKMKNN) is disordered. Residues 2006 to 2021 (SDLHSSEETNTKMKNN) show a composition bias toward basic and acidic residues. Residues Ser-2144 and Ser-2161 each carry the phosphoserine modification. Residue Thr-2167 is modified to Phosphothreonine. An interaction with ERCC6 region spans residues 2170–2446 (VWSPLASPST…SGSQLFEMHE (277 aa)). A phosphoserine mark is found at Ser-2172, Ser-2176, Ser-2195, Ser-2196, and Ser-2205. Residues 2227–2255 (RSHSSNSSPIGKSVKTSPTTQSKHNTTSA) show a composition bias toward polar residues. Residues 2227-2269 (RSHSSNSSPIGKSVKTSPTTQSKHNTTSAKGFLSPGSRSPKFK) are disordered. Phosphoserine occurs at positions 2260, 2339, 2391, 2393, 2465, and 2471.

The protein belongs to the RIF1 family. As to quaternary structure, interacts with TP53BP1 (when phosphorylated by ATM). May interact with TRF2. Interacts with SHLD2. Interacts with ERCC6 (via WHD region). Interacts with ASTE1. As to expression, highly expressed in testis.

It is found in the nucleus. It localises to the chromosome. The protein localises to the telomere. Its subcellular location is the cytoplasm. The protein resides in the cytoskeleton. It is found in the spindle. In terms of biological role, key regulator of TP53BP1 that plays a key role in the repair of double-strand DNA breaks (DSBs) in response to DNA damage: acts by promoting non-homologous end joining (NHEJ)-mediated repair of DSBs. In response to DNA damage, interacts with ATM-phosphorylated TP53BP1. Interaction with TP53BP1 leads to dissociate the interaction between NUDT16L1/TIRR and TP53BP1, thereby unmasking the tandem Tudor-like domain of TP53BP1 and allowing recruitment to DNA DSBs. Once recruited to DSBs, RIF1 and TP53BP1 act by promoting NHEJ-mediated repair of DSBs. In the same time, RIF1 and TP53BP1 specifically counteract the function of BRCA1 by blocking DSBs resection via homologous recombination (HR) during G1 phase. Also required for immunoglobulin class-switch recombination (CSR) during antibody genesis, a process that involves the generation of DNA DSBs. Promotes NHEJ of dysfunctional telomeres. The sequence is that of Telomere-associated protein RIF1 from Homo sapiens (Human).